The following is a 30-amino-acid chain: Photosystem I reaction center subunit XII (30 aa).

Residues 6–26 (VFTILAIALVPAVMAALLGSA) traverse the membrane as a helical segment.

It belongs to the PsaM family.

The protein resides in the cellular thylakoid membrane. This is Photosystem I reaction center subunit XII from Synechococcus sp. (strain JA-3-3Ab) (Cyanobacteria bacterium Yellowstone A-Prime).